A 303-amino-acid chain; its full sequence is Mycothiol acetyltransferase (303 aa).

2 consecutive N-acetyltransferase domains span residues 6–134 (TSLA…VEGD) and 154–303 (NEAY…QSSS). Residue E37 coordinates 1D-myo-inositol 2-(L-cysteinylamino)-2-deoxy-alpha-D-glucopyranoside. Residues 75–77 (VVV) and 83–88 (RQGYGS) contribute to the acetyl-CoA site. Residues E180, K221, and E233 each coordinate 1D-myo-inositol 2-(L-cysteinylamino)-2-deoxy-alpha-D-glucopyranoside. Residues 237–239 (VGL) and 244–250 (RRRGLGD) contribute to the acetyl-CoA site. Y271 lines the 1D-myo-inositol 2-(L-cysteinylamino)-2-deoxy-alpha-D-glucopyranoside pocket. 276-281 (NESARR) contacts acetyl-CoA.

The protein belongs to the acetyltransferase family. MshD subfamily. As to quaternary structure, monomer.

The catalysed reaction is 1D-myo-inositol 2-(L-cysteinylamino)-2-deoxy-alpha-D-glucopyranoside + acetyl-CoA = mycothiol + CoA + H(+). Functionally, catalyzes the transfer of acetyl from acetyl-CoA to desacetylmycothiol (Cys-GlcN-Ins) to form mycothiol. In Corynebacterium diphtheriae (strain ATCC 700971 / NCTC 13129 / Biotype gravis), this protein is Mycothiol acetyltransferase.